Here is a 743-residue protein sequence, read N- to C-terminus: Phosphoribosylformylglycinamidine synthase subunit PurL (743 aa).

His53 is an active-site residue. The ATP site is built by Tyr56 and Lys95. Glu97 contributes to the Mg(2+) binding site. Residues 98–101 and Arg120 each bind substrate; that span reads SHNH. His99 functions as the Proton acceptor in the catalytic mechanism. Position 121 (Asp121) interacts with Mg(2+). Gln245 provides a ligand contact to substrate. Position 275 (Asp275) interacts with Mg(2+). Residue 319-321 participates in substrate binding; the sequence is ESQ. ATP is bound by residues Asp502 and Gly539. Asn540 is a binding site for Mg(2+). Ser542 contacts substrate.

This sequence belongs to the FGAMS family. As to quaternary structure, monomer. Part of the FGAM synthase complex composed of 1 PurL, 1 PurQ and 2 PurS subunits.

It is found in the cytoplasm. The enzyme catalyses N(2)-formyl-N(1)-(5-phospho-beta-D-ribosyl)glycinamide + L-glutamine + ATP + H2O = 2-formamido-N(1)-(5-O-phospho-beta-D-ribosyl)acetamidine + L-glutamate + ADP + phosphate + H(+). The protein operates within purine metabolism; IMP biosynthesis via de novo pathway; 5-amino-1-(5-phospho-D-ribosyl)imidazole from N(2)-formyl-N(1)-(5-phospho-D-ribosyl)glycinamide: step 1/2. In terms of biological role, part of the phosphoribosylformylglycinamidine synthase complex involved in the purines biosynthetic pathway. Catalyzes the ATP-dependent conversion of formylglycinamide ribonucleotide (FGAR) and glutamine to yield formylglycinamidine ribonucleotide (FGAM) and glutamate. The FGAM synthase complex is composed of three subunits. PurQ produces an ammonia molecule by converting glutamine to glutamate. PurL transfers the ammonia molecule to FGAR to form FGAM in an ATP-dependent manner. PurS interacts with PurQ and PurL and is thought to assist in the transfer of the ammonia molecule from PurQ to PurL. This Lactobacillus helveticus (strain DPC 4571) protein is Phosphoribosylformylglycinamidine synthase subunit PurL.